The chain runs to 791 residues: Cullin-2 (791 aa).

The Cullin neddylation domain maps to 722–784 (DRKYYMECAI…KMYIQRTDQN (63 aa)). K736 participates in a covalent cross-link: Glycyl lysine isopeptide (Lys-Gly) (interchain with G-Cter in NEDD8).

Belongs to the cullin family. In terms of assembly, component of multiple CBC (Cul2-ElonginB-ElonginC) E3 ubiquitin-protein ligase complexes formed of cul-2, elb-1, elc-1, rbx-1 and a variable substrate recognition component. Component of the CBC(fem-1) E3 ubiquitin-protein ligase complex with fem-1, fem-2 and fem-3. The CBC(fem-1) complex interacts with tra-1 and promotes tra-1 degradation. Probable component of the CBC(lrr-1) E3 ubiquitin-protein ligase complex incuding cul-2, elb-1, elc-1, rbx-1 and lrr-1. The CBC(lrr-1) complex interacts with the DNA replisome complex at the end of S phase; the interaction promotes the release of components of the CMG helicase complex (a component of the replisome) from chromatin. Probable component of an CBC(zif-1) E3 ubiquitin-protein ligase including cul-2, elc-1, rbx-1 and zif-1. Part of an E3 ubiquitin-protein ligase complex including cul-2, elc-1 and zyg-11. Interacts with Skp1-related protein skr-10. In terms of processing, neddylated; which enhances the ubiquitination activity of CBC (Cul2-ElonginB-ElonginC) E3 ubiquitin-protein ligase complexes. In adults, highly expressed in meiotic cells and oocytes. In larvae, expressed in many proliferating cell types: P cells during the L1 stage; seam cells when they divide at every molt; vulval and somatic gonad cells in late L3 and L4 stages; and intestinal cells throughout larval development.

It localises to the cytoplasm. The protein localises to the nucleus. It participates in protein modification; protein ubiquitination. Functionally, core component of multiple cullin-RING-based CBC (Cul2-ElonginB-ElonginC) E3 ubiquitin-protein ligase complexes which mediate the ubiquitination and subsequent proteasomal degradation of target proteins. As a scaffold protein may contribute to catalysis through positioning of the substrate and the ubiquitin-conjugating enzyme. The functional specificity of the CBC complex depends on the variable substrate recognition component. May function in ubiquitin-mediated degradation of CKIs to target cki-1 for degradation. CBC(zif-1) may ensure germline precursor cell asymmetry by targeting germline proteins for destruction if expressed in non-germline cells. As part of the CBC(fem-1) complex directs ubiquitination of tra-1. As part of the CBC(lrr-1) complex, required for the ubiquitination and dissasembly of the CMG helicase complex from chromatin at the end of DNA replication. Positive cell-cycle regulator that is required at two distinct points in the cell cycle; the G1-to-S-phase transition and mitosis. Also required for proper cytoskeletal movement and mitotic chromosome condensation. In Caenorhabditis elegans, this protein is Cullin-2.